The chain runs to 358 residues: MKFVDEVTIRVEGGDGGDGCASFRREKYIPRGGPDGGDGGHGGSVWLRADEGLNTLADFRHERKFTAQRGENGMGKQRYGKSGQDREIAVPVGTLVSDADTGELIGELLEHGQRLLVARGGKGGLGNVHFKSSTNRAPRQYTPGTKADRRNLHLELRLLADVGLLGMPNAGKSTLVRAISSARPRVADYPFTTLYPNLGVVSVGAARSFVVADIPGLIEGAAEGAGLGIQFLKHLGRTRLVLHVIDAVPLDPAQDPVDDARKIVAELGRYSESLAARERWLVLNKLDLLPEEDRDAHVNDLLQRLQWGGPVYRISALSGDGTRQLAQDVMNRLEVMDEEAREAGERARREQRQEEGPE.

The Obg domain occupies 1–159; the sequence is MKFVDEVTIR…RNLHLELRLL (159 aa). The 175-residue stretch at 160–334 folds into the OBG-type G domain; that stretch reads ADVGLLGMPN…LAQDVMNRLE (175 aa). GTP contacts are provided by residues 166–173, 191–195, 213–216, 284–287, and 315–317; these read GMPNAGKS, FTTLY, DIPG, NKLD, and SAL. S173 and T193 together coordinate Mg(2+). The disordered stretch occupies residues 337-358; that stretch reads DEEAREAGERARREQRQEEGPE. Residues 341 to 358 show a composition bias toward basic and acidic residues; that stretch reads REAGERARREQRQEEGPE.

This sequence belongs to the TRAFAC class OBG-HflX-like GTPase superfamily. OBG GTPase family. Monomer. Mg(2+) is required as a cofactor.

It is found in the cytoplasm. An essential GTPase which binds GTP, GDP and possibly (p)ppGpp with moderate affinity, with high nucleotide exchange rates and a fairly low GTP hydrolysis rate. Plays a role in control of the cell cycle, stress response, ribosome biogenesis and in those bacteria that undergo differentiation, in morphogenesis control. This chain is GTPase Obg, found in Alkalilimnicola ehrlichii (strain ATCC BAA-1101 / DSM 17681 / MLHE-1).